Consider the following 280-residue polypeptide: Chaperone protein DnaJ 2 (280 aa).

One can recognise a J domain in the interval 6–70 (DYYAILGVPR…EKRRIYDTYG (65 aa)).

Belongs to the DnaJ family. Forms a heterononamer with DnaJ and DafA in the resting state. Three copies of each protein are present in the complex.

Its subcellular location is the cytoplasm. Does not influence ATP binding or hydrolysis nor ADP release. Exerts influence on the interaction of DnaK with substrates; in the presence of DafA, DnaJ inhibits substrate binding, and substrate already bound to DnaK is displaced by DnaJ and DafA. The polypeptide is Chaperone protein DnaJ 2 (dnaJ2) (Thermus thermophilus (strain ATCC 27634 / DSM 579 / HB8)).